The primary structure comprises 453 residues: MFARVFKAMPARASALTSVNASIQARFMATVRQQRTAHERATFTIRDGPIFHGKSFGARTNISGEAVFTTSLVGYPESLTDPSYRGQILVFTQPLIGNYGVPSAERDQHGLLKYFESPNLQAAGVVVADVAEQYSHWTAVESLGEWCAREGVPAISGVDTRAIVTYLREQGSSLARITVGEEYDADQDEAFTDPEQIHLVRQVSTKAPFHVSAADPQCHVAVIDCGVKENILRSLVSRGASITVFPFDYPIHKVAHHFDGVFISNGPGDPTHCQETTYHLRRLMETSQVPIFGICLGHQLLALAAGARTIKLKYGNRAHNIPALDLSTGRCHITSQNHGYAVDASTLPSDWKPYFVNLNDSSNEGMIHKSRPIFSTQFHPEAKGGPLDSSYLFDIYIDSVKKYKASQAAFHPQRDSLPSPLLVDLLAKERVGVQPTIGMQNIAAAATAAAAAA.

The N-terminal 28 residues, 1 to 28 (MFARVFKAMPARASALTSVNASIQARFM), are a transit peptide targeting the mitochondrion. The Glutamine amidotransferase type-1 domain maps to 219–406 (HVAVIDCGVK…IDSVKKYKAS (188 aa)). The active-site Nucleophile is the Cys295. Catalysis depends on residues His379 and Glu381.

The protein belongs to the CarA family. As to quaternary structure, heterodimer composed of 2 chains; the small (or glutamine) chain promotes the hydrolysis of glutamine to ammonia, which is used by the large (or ammonia) chain to synthesize carbamoyl phosphate.

It localises to the mitochondrion matrix. The catalysed reaction is hydrogencarbonate + L-glutamine + 2 ATP + H2O = carbamoyl phosphate + L-glutamate + 2 ADP + phosphate + 2 H(+). It catalyses the reaction L-glutamine + H2O = L-glutamate + NH4(+). It functions in the pathway amino-acid biosynthesis; L-arginine biosynthesis; carbamoyl phosphate from bicarbonate: step 1/1. Small subunit of the arginine-specific carbamoyl phosphate synthase (CPSase). CPSase catalyzes the formation of carbamoyl phosphate from the ammonia moiety of glutamine, carbonate, and phosphate donated by ATP, the first step of the arginine biosynthetic pathway. The small subunit (glutamine amidotransferase) binds and cleaves glutamine to supply the large subunit with the substrate ammonia. The sequence is that of Carbamoyl phosphate synthase arginine-specific small chain (cpa1) from Neosartorya fischeri (strain ATCC 1020 / DSM 3700 / CBS 544.65 / FGSC A1164 / JCM 1740 / NRRL 181 / WB 181) (Aspergillus fischerianus).